We begin with the raw amino-acid sequence, 331 residues long: Tyrosine recombinase XerD (331 aa).

The Core-binding (CB) domain occupies G8–Y93. The region spanning A114–Q318 is the Tyr recombinase domain. Residues R161 and K185 contribute to the active site. Residues Q214–T228 show a composition bias toward basic and acidic residues. Positions Q214–S239 are disordered. Catalysis depends on residues H270, R273, and H296. Y305 functions as the O-(3'-phospho-DNA)-tyrosine intermediate in the catalytic mechanism.

Belongs to the 'phage' integrase family. XerD subfamily. As to quaternary structure, forms a cyclic heterotetrameric complex composed of two molecules of XerC and two molecules of XerD.

It is found in the cytoplasm. Site-specific tyrosine recombinase, which acts by catalyzing the cutting and rejoining of the recombining DNA molecules. The XerC-XerD complex is essential to convert dimers of the bacterial chromosome into monomers to permit their segregation at cell division. It also contributes to the segregational stability of plasmids. The chain is Tyrosine recombinase XerD from Agrobacterium fabrum (strain C58 / ATCC 33970) (Agrobacterium tumefaciens (strain C58)).